A 100-amino-acid polypeptide reads, in one-letter code: Aspartyl/glutamyl-tRNA(Asn/Gln) amidotransferase subunit C (100 aa).

The protein belongs to the GatC family. Heterotrimer of A, B and C subunits.

It carries out the reaction L-glutamyl-tRNA(Gln) + L-glutamine + ATP + H2O = L-glutaminyl-tRNA(Gln) + L-glutamate + ADP + phosphate + H(+). The catalysed reaction is L-aspartyl-tRNA(Asn) + L-glutamine + ATP + H2O = L-asparaginyl-tRNA(Asn) + L-glutamate + ADP + phosphate + 2 H(+). Functionally, allows the formation of correctly charged Asn-tRNA(Asn) or Gln-tRNA(Gln) through the transamidation of misacylated Asp-tRNA(Asn) or Glu-tRNA(Gln) in organisms which lack either or both of asparaginyl-tRNA or glutaminyl-tRNA synthetases. The reaction takes place in the presence of glutamine and ATP through an activated phospho-Asp-tRNA(Asn) or phospho-Glu-tRNA(Gln). This Staphylococcus aureus (strain Newman) protein is Aspartyl/glutamyl-tRNA(Asn/Gln) amidotransferase subunit C.